A 96-amino-acid polypeptide reads, in one-letter code: UPF0102 protein ML1607 (96 aa).

Belongs to the UPF0102 family.

This chain is UPF0102 protein ML1607, found in Mycobacterium leprae (strain TN).